The sequence spans 164 residues: Peptide deformylase (164 aa).

2 residues coordinate Fe cation: C87 and H129. E130 is an active-site residue. H133 lines the Fe cation pocket.

Belongs to the polypeptide deformylase family. The cofactor is Fe(2+).

It carries out the reaction N-terminal N-formyl-L-methionyl-[peptide] + H2O = N-terminal L-methionyl-[peptide] + formate. Functionally, removes the formyl group from the N-terminal Met of newly synthesized proteins. Requires at least a dipeptide for an efficient rate of reaction. N-terminal L-methionine is a prerequisite for activity but the enzyme has broad specificity at other positions. In Thermotoga neapolitana (strain ATCC 49049 / DSM 4359 / NBRC 107923 / NS-E), this protein is Peptide deformylase.